Here is a 579-residue protein sequence, read N- to C-terminus: Vitamin B6 transporter TPN1 (579 aa).

12 consecutive transmembrane segments (helical) span residues 99 to 119 (TGGL…GLSF), 123 to 143 (LASS…CSIM), 158 to 178 (LFGW…VMGW), 199 to 219 (PLWV…IFGI), 222 to 242 (VIKV…LLYI), 275 to 295 (LCYS…ILFP), 303 to 323 (IFCL…ILGL), 363 to 383 (VVVL…SAAF), 395 to 415 (IPRW…ALIG), 422 to 442 (ILGN…ILLF), 520 to 540 (FAFI…YWIG), and 546 to 566 (FGEY…GVVY).

It belongs to the purine-cytosine permease (2.A.39) family.

It localises to the membrane. Functionally, thiamine-regulated, high affinity import carrier of pyridoxine, pyridoxal and pyridoxamine. This chain is Vitamin B6 transporter TPN1 (TPN1), found in Saccharomyces cerevisiae (Baker's yeast).